The chain runs to 270 residues: Glutamate 5-kinase (270 aa).

Lysine 18 lines the ATP pocket. Substrate-binding residues include serine 54, aspartate 141, and asparagine 153. Serine 173–aspartate 174 contacts ATP.

The protein belongs to the glutamate 5-kinase family.

Its subcellular location is the cytoplasm. It catalyses the reaction L-glutamate + ATP = L-glutamyl 5-phosphate + ADP. Its pathway is amino-acid biosynthesis; L-proline biosynthesis; L-glutamate 5-semialdehyde from L-glutamate: step 1/2. In terms of biological role, catalyzes the transfer of a phosphate group to glutamate to form L-glutamate 5-phosphate. This chain is Glutamate 5-kinase, found in Leifsonia xyli subsp. xyli (strain CTCB07).